Reading from the N-terminus, the 394-residue chain is Trans-enoyl reductase fumoC (394 aa).

62 to 65 (VDGK) is a binding site for NADP(+). Substrate is bound at residue 152–159 (ASLASVGM). Residues 224–227 (SSSS), Tyr-242, and 289–290 (LD) contribute to the NADP(+) site. Residue 309-313 (TLTQF) coordinates substrate. 378–379 (VK) contacts NADP(+).

This sequence belongs to the zinc-containing alcohol dehydrogenase family. As to quaternary structure, monomer.

It functions in the pathway secondary metabolite biosynthesis. Functionally, trans-enoyl reductase; part of the gene cluster that mediates the biosynthesis of fumosorinone, a 2-pyridone alkaloid that acts as an inhibitor of protein tyrosine phosphatase 1B which is implicated asa negative regulator of insulin receptor signaling and a potential drug target for the treatment of type II diabetes and other associated metabolic syndromes. The polyketide-amino acid backbone of fumosorinone is first assembled by the PKS-NRPS hybrid fumoS. The PKS modules condense one acetyl-CoA starter unit with 7 malonyl-CoA units, programmed C-methylations occurring after the first 3 and the sixth extensions, and cycles of full reduction occurring after the first 2 extensions. Because fumoS lacks a designated enoyl reductase (ER) domain, the required activity is provided the enoyl reductase fumoC. Upon formation of the polyketide backbone on the thiotemplate, the polyketide is transferred to the NRPS module and linked to tyrosine to produce the acyltetramic acid intermediate called prefumosorinone A. The cytochrome P450 monooxygenase fumoA then probably catalyzes an unprecedented oxidative ring expansion of prefumosorinone A to form prefumosorinone B which contains the 2-pyridone core of fumosorinone. The cytochrome P450 monooxygenase fumoB might hydroxylate the nitrogen of prefumosorinone B, but not the acyltetramic acid prefumosorinone A, to form fumosorinone. In Cordyceps fumosorosea (strain ARSEF 2679) (Isaria fumosorosea), this protein is Trans-enoyl reductase fumoC.